The chain runs to 611 residues: mRNA export factor GLE1 (611 aa).

2 disordered regions span residues 69–94 (SEDEMESDEGEESDDEEEEEDHSQIC) and 220–243 (KIRSEEAQEEARRKERAHQEEKIR). Over residues 71-89 (DEMESDEGEESDDEEEEED) the composition is skewed to acidic residues.

The protein belongs to the GLE1 family. In terms of assembly, part of the nuclear pore complex (NPC). The NPC has an eight-fold symmetrical structure comprising a central transport channel and two rings, the cytoplasmic and nuclear rings, to which eight filaments are attached. The cytoplasmic filaments have loose ends, while the nuclear filaments are joined in a distal ring, forming a nuclear basket. NPCs are highly dynamic in configuration and composition, and can be devided in 3 subcomplexes, the NUP62 subcomplex, the NUP107-160 subcomplex and the NUP93 subcomplex, containing approximately 30 different nucleoporin proteins.

The protein localises to the nucleus envelope. The protein resides in the nucleus. It is found in the nuclear pore complex. In terms of biological role, required for seed viability. The polypeptide is mRNA export factor GLE1 (Arabidopsis thaliana (Mouse-ear cress)).